Reading from the N-terminus, the 265-residue chain is 3-methyl-2-oxobutanoate hydroxymethyltransferase (265 aa).

Residues aspartate 44 and aspartate 83 each contribute to the Mg(2+) site. 3-methyl-2-oxobutanoate is bound by residues 44–45 (DS), aspartate 83, and lysine 113. Glutamate 115 is a binding site for Mg(2+). Catalysis depends on glutamate 183, which acts as the Proton acceptor.

Belongs to the PanB family. As to quaternary structure, homodecamer; pentamer of dimers. Mg(2+) serves as cofactor.

It is found in the cytoplasm. The enzyme catalyses 3-methyl-2-oxobutanoate + (6R)-5,10-methylene-5,6,7,8-tetrahydrofolate + H2O = 2-dehydropantoate + (6S)-5,6,7,8-tetrahydrofolate. It functions in the pathway cofactor biosynthesis; (R)-pantothenate biosynthesis; (R)-pantoate from 3-methyl-2-oxobutanoate: step 1/2. Catalyzes the reversible reaction in which hydroxymethyl group from 5,10-methylenetetrahydrofolate is transferred onto alpha-ketoisovalerate to form ketopantoate. The protein is 3-methyl-2-oxobutanoate hydroxymethyltransferase of Leptospira borgpetersenii serovar Hardjo-bovis (strain L550).